Reading from the N-terminus, the 770-residue chain is NAD-dependent malic enzyme (770 aa).

Residues 1 to 440 (MNTGDKAKSQ…KLNRFVFRSG (440 aa)) form a malic enzyme region. Catalysis depends on Lys-107, which acts as the Proton acceptor. Residues Glu-149 and Asp-150 each coordinate a divalent metal cation. 2 residues coordinate NAD(+): Asp-175 and Asn-300. The tract at residues 441–770 (FIMKPVFAAA…LAVVESSHPV (330 aa)) is phosphate acetyltransferase.

This sequence in the N-terminal section; belongs to the malic enzymes family. It in the C-terminal section; belongs to the phosphate acetyltransferase and butyryltransferase family. Homooctamer. Mg(2+) serves as cofactor. Requires Mn(2+) as cofactor.

It catalyses the reaction (S)-malate + NAD(+) = pyruvate + CO2 + NADH. Subject to substrate inhibition and shows allosteric regulation by acetyl-CoA. In terms of biological role, required for symbiotic nitrogen fixation. Plays a key role in the conversion of malate to acetyl-CoA for efficient tricarboxylic acid cycle function in nitrogen-fixating bacteria. The sequence is that of NAD-dependent malic enzyme (dme) from Rhizobium meliloti (strain 1021) (Ensifer meliloti).